The primary structure comprises 362 residues: Homoisocitrate dehydrogenase (362 aa).

NADH is bound at residue 79 to 81; it reads VQS. Position 81 (Ser81) interacts with (2R,3S)-homoisocitrate. Residues Ser81 and Ser91 each carry the phosphoserine modification. Residues Arg97, Arg107, Arg126, Tyr133, Lys196, and Asn198 each coordinate (2R,3S)-homoisocitrate. Asn198 contacts NADH. Asp232, Asp256, and Asp260 together coordinate Mg(2+). Residues 289–293 and Asn301 each bind NADH; that span reads GSAPD.

Belongs to the isocitrate and isopropylmalate dehydrogenases family. Mg(2+) serves as cofactor.

It is found in the cytoplasm. It catalyses the reaction (2R,3S)-homoisocitrate + NAD(+) = 2-oxoadipate + CO2 + NADH. It functions in the pathway amino-acid biosynthesis; L-lysine biosynthesis via AAA pathway; L-alpha-aminoadipate from 2-oxoglutarate: step 4/5. In Schizosaccharomyces pombe (strain 972 / ATCC 24843) (Fission yeast), this protein is Homoisocitrate dehydrogenase (lys12).